The chain runs to 587 residues: Aspartate--tRNA ligase (587 aa).

Glutamate 174 provides a ligand contact to L-aspartate. Residues 198-201 (QITK) are aspartate. Arginine 220 contributes to the L-aspartate binding site. ATP is bound by residues 220-222 (RDE) and glutamine 229. Histidine 443 contacts L-aspartate. ATP is bound at residue glutamate 477. Arginine 484 provides a ligand contact to L-aspartate. 529–532 (GLDR) contributes to the ATP binding site.

It belongs to the class-II aminoacyl-tRNA synthetase family. Type 1 subfamily. As to quaternary structure, homodimer.

The protein localises to the cytoplasm. It catalyses the reaction tRNA(Asp) + L-aspartate + ATP = L-aspartyl-tRNA(Asp) + AMP + diphosphate. Catalyzes the attachment of L-aspartate to tRNA(Asp) in a two-step reaction: L-aspartate is first activated by ATP to form Asp-AMP and then transferred to the acceptor end of tRNA(Asp). This is Aspartate--tRNA ligase from Streptococcus pneumoniae serotype 19F (strain G54).